A 435-amino-acid chain; its full sequence is Tryptophan synthase beta chain (435 aa).

An N6-(pyridoxal phosphate)lysine modification is found at Lys92.

This sequence belongs to the TrpB family. Tetramer of two alpha and two beta chains. It depends on pyridoxal 5'-phosphate as a cofactor.

It carries out the reaction (1S,2R)-1-C-(indol-3-yl)glycerol 3-phosphate + L-serine = D-glyceraldehyde 3-phosphate + L-tryptophan + H2O. The protein operates within amino-acid biosynthesis; L-tryptophan biosynthesis; L-tryptophan from chorismate: step 5/5. Its function is as follows. The beta subunit is responsible for the synthesis of L-tryptophan from indole and L-serine. The sequence is that of Tryptophan synthase beta chain from Albidiferax ferrireducens (strain ATCC BAA-621 / DSM 15236 / T118) (Rhodoferax ferrireducens).